The following is a 339-amino-acid chain: Ketol-acid reductoisomerase (NADP(+)) (339 aa).

The 182-residue stretch at 1 to 182 (MRVYYDRDAD…GGGRAGIIET (182 aa)) folds into the KARI N-terminal Rossmann domain. Residues 24–27 (YGSQ), Arg48, Ser51, Ser53, and 83–86 (DELQ) each bind NADP(+). Residue His108 is part of the active site. Gly134 provides a ligand contact to NADP(+). Positions 183 to 328 (SFREETETDL…ARLRDMMPWI (146 aa)) constitute a KARI C-terminal knotted domain. Asp191, Glu195, Glu227, and Glu231 together coordinate Mg(2+). Ser252 serves as a coordination point for substrate.

This sequence belongs to the ketol-acid reductoisomerase family. The cofactor is Mg(2+).

It carries out the reaction (2R)-2,3-dihydroxy-3-methylbutanoate + NADP(+) = (2S)-2-acetolactate + NADPH + H(+). The catalysed reaction is (2R,3R)-2,3-dihydroxy-3-methylpentanoate + NADP(+) = (S)-2-ethyl-2-hydroxy-3-oxobutanoate + NADPH + H(+). It participates in amino-acid biosynthesis; L-isoleucine biosynthesis; L-isoleucine from 2-oxobutanoate: step 2/4. The protein operates within amino-acid biosynthesis; L-valine biosynthesis; L-valine from pyruvate: step 2/4. Its function is as follows. Involved in the biosynthesis of branched-chain amino acids (BCAA). Catalyzes an alkyl-migration followed by a ketol-acid reduction of (S)-2-acetolactate (S2AL) to yield (R)-2,3-dihydroxy-isovalerate. In the isomerase reaction, S2AL is rearranged via a Mg-dependent methyl migration to produce 3-hydroxy-3-methyl-2-ketobutyrate (HMKB). In the reductase reaction, this 2-ketoacid undergoes a metal-dependent reduction by NADPH to yield (R)-2,3-dihydroxy-isovalerate. The chain is Ketol-acid reductoisomerase (NADP(+)) from Afipia carboxidovorans (strain ATCC 49405 / DSM 1227 / KCTC 32145 / OM5) (Oligotropha carboxidovorans).